The following is a 193-amino-acid chain: Inosine triphosphate pyrophosphatase (193 aa).

10–15 (TGNANK) contacts ITP. Glu42 is a binding site for Mg(2+). Residues Lys54, 70–71 (DT), Lys87, 146–149 (FGWD), Lys169, and 174–175 (HR) contribute to the ITP site.

This sequence belongs to the HAM1 NTPase family. In terms of assembly, homodimer. Mg(2+) serves as cofactor. The cofactor is Mn(2+).

It is found in the cytoplasm. The protein localises to the nucleus. The enzyme catalyses ITP + H2O = IMP + diphosphate + H(+). The catalysed reaction is dITP + H2O = dIMP + diphosphate + H(+). It catalyses the reaction XTP + H2O = XMP + diphosphate + H(+). In terms of biological role, pyrophosphatase that hydrolyzes non-canonical purine nucleotides such as inosine triphosphate (ITP), deoxyinosine triphosphate (dITP) or xanthosine 5'-triphosphate (XTP) to their respective monophosphate derivatives. The enzyme does not distinguish between the deoxy- and ribose forms. Probably excludes non-canonical purines from RNA and DNA precursor pools, thus preventing their incorporation into RNA and DNA and avoiding chromosomal lesions. This chain is Inosine triphosphate pyrophosphatase, found in Mycosarcoma maydis (Corn smut fungus).